We begin with the raw amino-acid sequence, 653 residues long: Glyceraldehyde-3-phosphate:ferredoxin oxidoreductase (653 aa).

Residues Arg-70, Gly-89, Arg-196, Ala-197, Gly-199, and Arg-206 each coordinate tungstopterin. Residues Cys-333 and Cys-337 each contribute to the [4Fe-4S] cluster site. Tungstopterin is bound by residues Asp-378, Asp-383, and Asp-544. Cys-549 provides a ligand contact to [4Fe-4S] cluster.

Belongs to the AOR/FOR family. As to quaternary structure, monomer. The cofactor is [4Fe-4S] cluster. Requires tungstopterin as cofactor.

The enzyme catalyses D-glyceraldehyde 3-phosphate + 2 oxidized [2Fe-2S]-[ferredoxin] + H2O = (2R)-3-phosphoglycerate + 2 reduced [2Fe-2S]-[ferredoxin] + 3 H(+). With respect to regulation, sensitive to oxygen. Activity increased by 58%-93% in the presence of acetyl phosphate, 3-phosphoglycerate or 2,3-bisphosphoglycerate at 10 mM concentration. Inhibited by up to 25% in the presence of crotonaldehyde or formaldehyde at 10 mM concentration. Inhibited by up to 50% by sodium dithionate. 3.5-fold increase in activity observed by addition of potassium phosphate or sodium arsenate at 200 mM concentration. Activity enhanced by potassium chloride, sodium citrate or sodium sulfate at 200 mM concentration. Functionally, catalyzes the oxidation of glyceraldehyde-3-phosphate to 3-phosphoglycerate. Uses ferredoxin as electron acceptor. In vitro can also use benzyl viologen, but not NADP or NAD, as electron acceptor. Probably acts as a glycolytic enzyme in place of glyceraldehyde-3-phosphate dehydrogenase (GAPDH) and phosphoglycerate kinase (PGK) in an unusual Emden-Meyerhof glycolysis. The sequence is that of Glyceraldehyde-3-phosphate:ferredoxin oxidoreductase from Pyrococcus furiosus (strain ATCC 43587 / DSM 3638 / JCM 8422 / Vc1).